Consider the following 42-residue polypeptide: Photosystem I reaction center subunit IX (42 aa).

Residues 7–27 (YLSVAPVLSTLWFGALAGLLI) traverse the membrane as a helical segment.

The protein belongs to the PsaJ family.

It is found in the plastid. The protein resides in the chloroplast thylakoid membrane. In terms of biological role, may help in the organization of the PsaE and PsaF subunits. In Guizotia abyssinica (Niger), this protein is Photosystem I reaction center subunit IX.